The chain runs to 137 residues: Large ribosomal subunit protein uL16 (137 aa).

The protein belongs to the universal ribosomal protein uL16 family. In terms of assembly, part of the 50S ribosomal subunit.

In terms of biological role, binds 23S rRNA and is also seen to make contacts with the A and possibly P site tRNAs. This chain is Large ribosomal subunit protein uL16, found in Xylella fastidiosa (strain M23).